The following is a 140-amino-acid chain: Putative nickel-responsive regulator 3 (140 aa).

4 residues coordinate Ni(2+): H81, H92, H94, and C100.

Belongs to the transcriptional regulatory CopG/NikR family. The cofactor is Ni(2+).

Functionally, transcriptional regulator. The polypeptide is Putative nickel-responsive regulator 3 (Methanosarcina mazei (strain ATCC BAA-159 / DSM 3647 / Goe1 / Go1 / JCM 11833 / OCM 88) (Methanosarcina frisia)).